The chain runs to 560 residues: OTU domain-containing protein 5-A (560 aa).

Disordered regions lie at residues 1-100 (MTIL…MACV) and 141-190 (GGGT…QSED). The segment covering 17-32 (DHPDDPDRRTGSDPHQ) has biased composition (basic and acidic residues). The segment covering 141–163 (GGGTGPGAAGGGGGGGGGGGVGG) has biased composition (gly residues). An OTU domain is found at 211–334 (FVIKKMKEDG…NIHYNSVVNP (124 aa)). The interval 216–222 (MKEDGAC) is cys-loop. The active site involves aspartate 219. Cysteine 222 (nucleophile) is an active-site residue. A variable-loop region spans residues 271-281 (KRKNNCHGNHI). The interval 322 to 327 (YHRNIH) is his-loop. Histidine 327 is a catalytic residue. The tract at residues 411–496 (ARQPRKASAT…ACVGPDRPTS (86 aa)) is disordered. Low complexity-rich tracts occupy residues 417-430 (ASAT…AASS) and 437-448 (ARSPRQRSSAPS).

The protein belongs to the peptidase C85 family.

It catalyses the reaction Thiol-dependent hydrolysis of ester, thioester, amide, peptide and isopeptide bonds formed by the C-terminal Gly of ubiquitin (a 76-residue protein attached to proteins as an intracellular targeting signal).. Functionally, deubiquitinating enzyme that may function as negative regulator of the innate immune system. Has peptidase activity towards 'Lys-48'- and 'Lys-63'-linked polyubiquitin chains. Can also cleave 'Lys-11'-linked ubiquitin chains (in vitro). The polypeptide is OTU domain-containing protein 5-A (otud5a) (Danio rerio (Zebrafish)).